The sequence spans 171 residues: Co-chaperone protein HscB (171 aa).

A J domain is found at 2–74; the sequence is DYFTLFGLPA…LTRAEYLLSL (73 aa).

It belongs to the HscB family. In terms of assembly, interacts with HscA and stimulates its ATPase activity. Interacts with IscU.

Functionally, co-chaperone involved in the maturation of iron-sulfur cluster-containing proteins. Seems to help targeting proteins to be folded toward HscA. The sequence is that of Co-chaperone protein HscB from Klebsiella pneumoniae subsp. pneumoniae (strain ATCC 700721 / MGH 78578).